The primary structure comprises 219 residues: Exosomal polycystin-1-interacting protein (219 aa).

The signal sequence occupies residues 1–19 (MAPPSRHCLLLISTLGVFA). Residues N29, N42, N95, N188, and N210 are each glycosylated (N-linked (GlcNAc...) asparagine).

Belongs to the EPCIP family. In terms of assembly, homooligomer. Interacts with PKD1 (via the PKD repeats in the N-terminal extracellular region); the interaction is not dependent on N-glycosylation of either protein. In terms of processing, N-glycosylated. As to expression, detected in the kidney and in the endothelium of large blood vessels (at protein level).

It localises to the vesicle. The protein resides in the secreted. The protein localises to the extracellular exosome. Its function is as follows. Likely to be involved with PKD1 in the detection, sequestration and exocytosis of senescent mitochondria. The protein is Exosomal polycystin-1-interacting protein of Homo sapiens (Human).